Consider the following 411-residue polypeptide: Multidrug resistance protein MdtA (411 aa).

Residues 1 to 19 form the signal peptide; it reads MNAKRIRGLLILAAVIAIA. The segment covering 31–49 has biased composition (polar residues); sequence PAAPGTSEQHAARTSHSEN. The interval 31 to 58 is disordered; it reads PAAPGTSEQHAARTSHSENSGSGGGRRA.

Belongs to the membrane fusion protein (MFP) (TC 8.A.1) family. As to quaternary structure, part of a tripartite efflux system composed of MdtA, MdtB and MdtC.

It is found in the cell inner membrane. This is Multidrug resistance protein MdtA from Pectobacterium atrosepticum (strain SCRI 1043 / ATCC BAA-672) (Erwinia carotovora subsp. atroseptica).